The following is a 320-amino-acid chain: Metapyrocatechase 2 (320 aa).

Disordered stretches follow at residues 1–21 (MDTH…RPRH) and 131–153 (GPKT…GQRG). VOC domains are found at residues 25-131 (SIDH…VKIG) and 167-282 (RLSH…YSAD). Fe cation-binding residues include His-170, His-227, and Glu-278.

The protein belongs to the extradiol ring-cleavage dioxygenase family. Fe(2+) serves as cofactor.

It catalyses the reaction catechol + O2 = (2Z,4E)-2-hydroxy-6-oxohexa-2,4-dienoate + H(+). This chain is Metapyrocatechase 2 (mcpII), found in Cupriavidus necator (Alcaligenes eutrophus).